Reading from the N-terminus, the 490-residue chain is uncharacterized protein (490 aa).

Positions 1–19 (MSITSVSLYVYLICAGGHA) are cleaved as a signal peptide.

This sequence belongs to the mimivirus L137 family.

This is an uncharacterized protein from Acanthamoeba polyphaga (Amoeba).